The primary structure comprises 179 residues: Adenine phosphoribosyltransferase (179 aa).

This sequence belongs to the purine/pyrimidine phosphoribosyltransferase family. As to quaternary structure, homodimer.

It is found in the cytoplasm. The catalysed reaction is AMP + diphosphate = 5-phospho-alpha-D-ribose 1-diphosphate + adenine. The protein operates within purine metabolism; AMP biosynthesis via salvage pathway; AMP from adenine: step 1/1. Catalyzes a salvage reaction resulting in the formation of AMP, that is energically less costly than de novo synthesis. The polypeptide is Adenine phosphoribosyltransferase (Beijerinckia indica subsp. indica (strain ATCC 9039 / DSM 1715 / NCIMB 8712)).